A 27-amino-acid chain; its full sequence is Morintide mO5 (27 aa).

The 27-residue stretch at 1–27 folds into the Chitin-binding type-1 domain; that stretch reads NGLCCSQYGFCGTTSQYCSRANGCQSN. Cys-4 and Cys-18 are oxidised to a cystine.

In terms of tissue distribution, seeds (at protein level).

Functionally, chitin-binding protein which functions in defense against chitin-containing fungal pathogens. The chain is Morintide mO5 from Moringa oleifera (Horseradish tree).